Consider the following 43-residue polypeptide: Protein PsbN (43 aa).

Residues 7–27 (FVVGILVALVLITAFAVYTAF) traverse the membrane as a helical segment.

It belongs to the PsbN family.

It localises to the cell inner membrane. May play a role in photosystem I and II biogenesis. This is Protein PsbN from Gloeobacter violaceus (strain ATCC 29082 / PCC 7421).